Here is a 394-residue protein sequence, read N- to C-terminus: Chorismate synthase (394 aa).

NADP(+) is bound by residues R40 and R46. Residues 135 to 137 (RAS) and 255 to 256 (QA) each bind FMN. The tract at residues 270–291 (RRRGSGAHDEIEPAGAGSRRVR) is disordered. FMN contacts are provided by residues G302, 317 to 321 (KPISS), and R343.

It belongs to the chorismate synthase family. As to quaternary structure, homotetramer. FMNH2 serves as cofactor.

The enzyme catalyses 5-O-(1-carboxyvinyl)-3-phosphoshikimate = chorismate + phosphate. The protein operates within metabolic intermediate biosynthesis; chorismate biosynthesis; chorismate from D-erythrose 4-phosphate and phosphoenolpyruvate: step 7/7. Its function is as follows. Catalyzes the anti-1,4-elimination of the C-3 phosphate and the C-6 proR hydrogen from 5-enolpyruvylshikimate-3-phosphate (EPSP) to yield chorismate, which is the branch point compound that serves as the starting substrate for the three terminal pathways of aromatic amino acid biosynthesis. This reaction introduces a second double bond into the aromatic ring system. This chain is Chorismate synthase, found in Frankia casuarinae (strain DSM 45818 / CECT 9043 / HFP020203 / CcI3).